Reading from the N-terminus, the 322-residue chain is Malate dehydrogenase (322 aa).

NAD(+) is bound by residues 10–15 (GSGQIG) and Asp34. Substrate-binding residues include Arg83 and Arg89. Residues Asn96 and 119–121 (ITN) contribute to the NAD(+) site. The substrate site is built by Asn121 and Arg152. His176 (proton acceptor) is an active-site residue.

Belongs to the LDH/MDH superfamily. MDH type 3 family.

It carries out the reaction (S)-malate + NAD(+) = oxaloacetate + NADH + H(+). Functionally, catalyzes the reversible oxidation of malate to oxaloacetate. The sequence is that of Malate dehydrogenase from Bradyrhizobium sp. (strain ORS 278).